Consider the following 113-residue polypeptide: Photosystem II reaction center Psb28 protein (113 aa).

Belongs to the Psb28 family. In terms of assembly, part of the photosystem II complex.

The protein resides in the cellular thylakoid membrane. The protein is Photosystem II reaction center Psb28 protein of Prochlorococcus marinus (strain NATL2A).